The chain runs to 109 residues: EPIDERMAL PATTERNING FACTOR-like protein 4 (109 aa).

The signal sequence occupies residues 1 to 26 (MGTFRRRRRFLLAALVTFALLHLFSA). Intrachain disulfides connect Cys66/Cys100, Cys70/Cys76, and Cys73/Cys102.

The protein belongs to the plant cysteine rich small secretory peptide family. Epidermal patterning factor subfamily. In terms of assembly, interacts with ERECTA. Expressed at the base of the apical meristem at 3 days after germination. Not detected in the hypocotyl. Expressed in developing stems soon after bolting, in inflorescence stems and in young siliques.

The protein localises to the secreted. Acts primarily as positive regulator of inflorescence growth. Endodermal expression is sufficient for proper inflorescence architecture. Redundantly involved with EPFL6 in procambial development regulation. Controls stomatal patterning. Mediates stomatal development inhibition. TMM (AC Q9SSD1) functions to dampen or block CLL2 signaling. Acts as a growth-regulatory ligand for ERECTA family receptors. The sequence is that of EPIDERMAL PATTERNING FACTOR-like protein 4 from Arabidopsis thaliana (Mouse-ear cress).